Here is a 727-residue protein sequence, read N- to C-terminus: Glucans biosynthesis glucosyltransferase H (727 aa).

Residues 18–38 (SAMPNERPGAMEPQNLSKMPE) are disordered. The next 7 helical transmembrane spans lie at 58–78 (FLVVGGALLLSLFAIYEMGAV), 97–117 (VNFCWIALAFCSGIAGFLILL), 278–298 (LQQFAARIYGPVIGTGLGWWV), 408–428 (IMAYLSSPFWLMLILTGLMLA), 460–480 (LFYITMGVLFGPKVFGVLLLL), 496–516 (IFSVIFEVILSALIAPIMMFI), and 572–592 (LLAWMSPALIGLWIAVPISAW).

It belongs to the glycosyltransferase 2 family. OpgH subfamily.

The protein resides in the cell inner membrane. It participates in glycan metabolism; osmoregulated periplasmic glucan (OPG) biosynthesis. Functionally, involved in the biosynthesis of osmoregulated periplasmic glucans (OPGs). The chain is Glucans biosynthesis glucosyltransferase H from Shewanella baltica (strain OS185).